We begin with the raw amino-acid sequence, 276 residues long: MPEMPEVETVRRTLTPLVKGKTIAKINIWYPKIIVNDPAEFVKKLTNKRILKIDRYGKYLLFRFNDDLTMVSHLRMEGKYHLVSPDTPKGKHEHVEFIFTDGTALRYDDVRKFGRMHLVETGTERKTTGIRHLGPEPNTAEFNLKYFVDALSQKKKNIKNTLLDQTIVCGLGNIYVDEVLWKSKIHPLSSAKAIPADKVKNLYQNINHTIAIATKERGTTVHTYLDANGEIGGYQKMLQVYGHAGEECSSCGTILEKIKVNGRGTTFCPHCQVLYK.

The active-site Schiff-base intermediate with DNA is the proline 2. The active-site Proton donor is the glutamate 3. The Proton donor; for beta-elimination activity role is filled by lysine 58. Positions 92, 111, and 154 each coordinate DNA. The FPG-type zinc-finger motif lies at 239–273 (QVYGHAGEECSSCGTILEKIKVNGRGTTFCPHCQV). Arginine 263 (proton donor; for delta-elimination activity) is an active-site residue.

The protein belongs to the FPG family. In terms of assembly, monomer. Zn(2+) serves as cofactor.

The catalysed reaction is Hydrolysis of DNA containing ring-opened 7-methylguanine residues, releasing 2,6-diamino-4-hydroxy-5-(N-methyl)formamidopyrimidine.. It carries out the reaction 2'-deoxyribonucleotide-(2'-deoxyribose 5'-phosphate)-2'-deoxyribonucleotide-DNA = a 3'-end 2'-deoxyribonucleotide-(2,3-dehydro-2,3-deoxyribose 5'-phosphate)-DNA + a 5'-end 5'-phospho-2'-deoxyribonucleoside-DNA + H(+). Functionally, involved in base excision repair of DNA damaged by oxidation or by mutagenic agents. Acts as a DNA glycosylase that recognizes and removes damaged bases. Has a preference for oxidized purines, such as 7,8-dihydro-8-oxoguanine (8-oxoG). Has AP (apurinic/apyrimidinic) lyase activity and introduces nicks in the DNA strand. Cleaves the DNA backbone by beta-delta elimination to generate a single-strand break at the site of the removed base with both 3'- and 5'-phosphates. In Lactobacillus gasseri (strain ATCC 33323 / DSM 20243 / BCRC 14619 / CIP 102991 / JCM 1131 / KCTC 3163 / NCIMB 11718 / NCTC 13722 / AM63), this protein is Formamidopyrimidine-DNA glycosylase.